We begin with the raw amino-acid sequence, 122 residues long: Small ribosomal subunit protein uS13 (122 aa).

The segment at 93–122 is disordered; it reads RRGLPVRGQRTKTNARTRKGPKKTIAGKKK.

The protein belongs to the universal ribosomal protein uS13 family. Part of the 30S ribosomal subunit. Forms a loose heterodimer with protein S19. Forms two bridges to the 50S subunit in the 70S ribosome.

In terms of biological role, located at the top of the head of the 30S subunit, it contacts several helices of the 16S rRNA. In the 70S ribosome it contacts the 23S rRNA (bridge B1a) and protein L5 of the 50S subunit (bridge B1b), connecting the 2 subunits; these bridges are implicated in subunit movement. Contacts the tRNAs in the A and P-sites. In Corynebacterium kroppenstedtii (strain DSM 44385 / JCM 11950 / CIP 105744 / CCUG 35717), this protein is Small ribosomal subunit protein uS13.